A 1436-amino-acid polypeptide reads, in one-letter code: Nuclear pore complex protein Nup160 (1436 aa).

Residues Ser44, Ser490, Ser949, and Ser1157 each carry the phosphoserine modification.

In terms of assembly, part of the nuclear pore complex (NPC). Forms part of the NUP160 subcomplex in the nuclear pore which is composed of NUP160, NUP133, NUP107 and NUP96. This complex plays a role in RNA export and in tethering NUP98 and NUP153 to the nucleus.

Its subcellular location is the nucleus. The protein resides in the nuclear pore complex. Functions as a component of the nuclear pore complex (NPC). Involved in poly(A)+ RNA transport. The chain is Nuclear pore complex protein Nup160 (NUP160) from Homo sapiens (Human).